Reading from the N-terminus, the 344-residue chain is Aspartate-semialdehyde dehydrogenase (344 aa).

NADP(+) is bound by residues 10–13 and 38–39; these read TGQV and RS. R101 provides a ligand contact to phosphate. The Acyl-thioester intermediate role is filled by C131. A substrate-binding site is contributed by Q158. 161–162 is a binding site for NADP(+); it reads SG. Phosphate is bound at residue K228. Position 250 (R250) interacts with substrate. The active-site Proton acceptor is the H257. Position 326 (N326) interacts with NADP(+).

It belongs to the aspartate-semialdehyde dehydrogenase family. In terms of assembly, homodimer.

The catalysed reaction is L-aspartate 4-semialdehyde + phosphate + NADP(+) = 4-phospho-L-aspartate + NADPH + H(+). It participates in amino-acid biosynthesis; L-lysine biosynthesis via DAP pathway; (S)-tetrahydrodipicolinate from L-aspartate: step 2/4. Its pathway is amino-acid biosynthesis; L-methionine biosynthesis via de novo pathway; L-homoserine from L-aspartate: step 2/3. The protein operates within amino-acid biosynthesis; L-threonine biosynthesis; L-threonine from L-aspartate: step 2/5. Its function is as follows. Catalyzes the NADPH-dependent formation of L-aspartate-semialdehyde (L-ASA) by the reductive dephosphorylation of L-aspartyl-4-phosphate. This chain is Aspartate-semialdehyde dehydrogenase, found in Corynebacterium melassecola.